Reading from the N-terminus, the 348-residue chain is Aldose 1-epimerase (348 aa).

Substrate is bound at residue Arg80. Residue His180 is the Proton donor of the active site. Asp243 provides a ligand contact to substrate. Glu311 functions as the Proton acceptor in the catalytic mechanism.

The protein belongs to the aldose epimerase family.

The enzyme catalyses alpha-D-glucose = beta-D-glucose. Its pathway is carbohydrate metabolism; hexose metabolism. In terms of biological role, mutarotase converts alpha-aldose to the beta-anomer. It is active on D-glucose, L-arabinose, D-xylose, D-galactose, maltose and lactose. The protein is Aldose 1-epimerase (galM) of Streptococcus thermophilus.